The following is a 353-amino-acid chain: UPF0283 membrane protein YcjF (353 aa).

3 helical membrane passes run 70–90 (MVMG…VQWT), 100–120 (VALG…GSVV), and 213–233 (ESTL…FIAW).

Belongs to the UPF0283 family.

The protein localises to the cell inner membrane. The sequence is that of UPF0283 membrane protein YcjF from Escherichia coli O7:K1 (strain IAI39 / ExPEC).